Consider the following 67-residue polypeptide: DNA-directed RNA polymerase subunit omega (67 aa).

This sequence belongs to the RNA polymerase subunit omega family. In terms of assembly, the RNAP catalytic core consists of 2 alpha, 1 beta, 1 beta' and 1 omega subunit. When a sigma factor is associated with the core the holoenzyme is formed, which can initiate transcription.

It catalyses the reaction RNA(n) + a ribonucleoside 5'-triphosphate = RNA(n+1) + diphosphate. Promotes RNA polymerase assembly. Latches the N- and C-terminal regions of the beta' subunit thereby facilitating its interaction with the beta and alpha subunits. This Leptothrix cholodnii (strain ATCC 51168 / LMG 8142 / SP-6) (Leptothrix discophora (strain SP-6)) protein is DNA-directed RNA polymerase subunit omega.